Here is a 303-residue protein sequence, read N- to C-terminus: Dipeptide transport system permease protein DppB (303 aa).

A run of 7 helical transmembrane segments spans residues 9–29 (LGLLLLTLFLIVTLTFFMMQV), 62–82 (YFIYVGHMFTGNFGTSFIYTN), 93–113 (LPVSMQLGTQALILGTVLGAL), 129–149 (IFGFLSVLGISVPSFVIGTLI), 166–186 (GTFSQTIMPTIALSFAPMAVV), 227–247 (IPMLTLIGPMAAGLLTGSVLI), and 269–289 (FPVIMATTIVYAVILMVFILV). Residues 93-290 (LPVSMQLGTQ…VILMVFILVT (198 aa)) enclose the ABC transmembrane type-1 domain.

This sequence belongs to the binding-protein-dependent transport system permease family. OppBC subfamily. In terms of assembly, the complex is composed of two ATP-binding proteins (DppD and DppF), two transmembrane proteins (DppB and DppC) and a solute-binding protein (DppA).

It is found in the cell membrane. Functionally, part of the ABC transporter DppABCDF involved in dipeptide transport. Responsible for the translocation of the substrate across the membrane. The polypeptide is Dipeptide transport system permease protein DppB (Lactococcus lactis subsp. cremoris (strain MG1363)).